The sequence spans 341 residues: L-threonine 3-dehydrogenase (341 aa).

Position 38 (Cys38) interacts with Zn(2+). Residues Thr40 and His43 each act as charge relay system in the active site. Positions 63, 64, 93, 96, 99, and 107 each coordinate Zn(2+). NAD(+)-binding positions include Ile175, Asp195, Arg200, 262–264, and 286–287; these read LGI and IY.

It belongs to the zinc-containing alcohol dehydrogenase family. In terms of assembly, homotetramer. Zn(2+) serves as cofactor.

The protein resides in the cytoplasm. It carries out the reaction L-threonine + NAD(+) = (2S)-2-amino-3-oxobutanoate + NADH + H(+). It participates in amino-acid degradation; L-threonine degradation via oxydo-reductase pathway; glycine from L-threonine: step 1/2. Catalyzes the NAD(+)-dependent oxidation of L-threonine to 2-amino-3-ketobutyrate. The chain is L-threonine 3-dehydrogenase from Solibacter usitatus (strain Ellin6076).